A 72-amino-acid polypeptide reads, in one-letter code: Translation initiation factor IF-1 (72 aa).

Residues 1–72 (MAKDDVIVVD…DKGRITHRYK (72 aa)) form the S1-like domain.

The protein belongs to the IF-1 family. Component of the 30S ribosomal translation pre-initiation complex which assembles on the 30S ribosome in the order IF-2 and IF-3, IF-1 and N-formylmethionyl-tRNA(fMet); mRNA recruitment can occur at any time during PIC assembly.

Its subcellular location is the cytoplasm. Its function is as follows. One of the essential components for the initiation of protein synthesis. Stabilizes the binding of IF-2 and IF-3 on the 30S subunit to which N-formylmethionyl-tRNA(fMet) subsequently binds. Helps modulate mRNA selection, yielding the 30S pre-initiation complex (PIC). Upon addition of the 50S ribosomal subunit IF-1, IF-2 and IF-3 are released leaving the mature 70S translation initiation complex. This chain is Translation initiation factor IF-1, found in Aliarcobacter butzleri (strain RM4018) (Arcobacter butzleri).